The sequence spans 331 residues: Protein Brevis radix-like 1 (331 aa).

The interval 1–111 is disordered; the sequence is MFTCINCTKM…HQSGRPDSRF (111 aa). Polar residues-rich tracts occupy residues 25–41 and 48–66; these read STTP…TTQI and FSGS…SSNL. Residues 137–192 form the BRX 1 domain; sequence KEWMAQVEPGVHITFVSLPSGGNDLKRIRFSREVFDKWQAQRWWGENYDRIVELYN. Disordered stretches follow at residues 201-246 and 258-279; these read LQTP…VPHH and TTSS…GEWV. Residues 221 to 235 show a composition bias toward basic and acidic residues; the sequence is DSARESRDWTQRDNN. One can recognise a BRX 2 domain in the interval 276-331; the sequence is GEWVEEDEPGVYITIRQLPDGTRELRRVRFSRERFGEVHAKTWWEQNRDRIQTQYL.

This sequence belongs to the BRX family. In terms of assembly, heterodimer with BRXL1. As to expression, expressed in roots.

Its subcellular location is the nucleus. Its function is as follows. May act as a regulator of cell proliferation and elongation in the root. The chain is Protein Brevis radix-like 1 (BRXL1) from Arabidopsis thaliana (Mouse-ear cress).